Reading from the N-terminus, the 430-residue chain is tRNA(Ile)-lysidine synthase (430 aa).

21–26 (SGGLDS) provides a ligand contact to ATP.

The protein belongs to the tRNA(Ile)-lysidine synthase family.

The protein localises to the cytoplasm. The enzyme catalyses cytidine(34) in tRNA(Ile2) + L-lysine + ATP = lysidine(34) in tRNA(Ile2) + AMP + diphosphate + H(+). Ligates lysine onto the cytidine present at position 34 of the AUA codon-specific tRNA(Ile) that contains the anticodon CAU, in an ATP-dependent manner. Cytidine is converted to lysidine, thus changing the amino acid specificity of the tRNA from methionine to isoleucine. The protein is tRNA(Ile)-lysidine synthase of Salmonella choleraesuis (strain SC-B67).